Here is a 164-residue protein sequence, read N- to C-terminus: MNIVDQQTFRDAMSCMGAAVNIITTDGPAGRAGFTASAVCSVTDTPPTLLVCLNRGASVWPVFNENRTLCVNTLSAGQEPLSNLFGGKTPMEHRFAAARWQTGVTGCPQLEEALVSFDCRISQVVSVGTHDILFCAIEAIHRHTTPYGLVWFDRSYHALMRPAC.

It belongs to the non-flavoprotein flavin reductase family. RutF subfamily.

It catalyses the reaction FMNH2 + NAD(+) = FMN + NADH + 2 H(+). Its function is as follows. Catalyzes the reduction of FMN to FMNH2 which is used to reduce pyrimidine by RutA via the Rut pathway. The sequence is that of FMN reductase (NADH) RutF from Shigella flexneri serotype X (strain 2002017).